Here is a 43-residue protein sequence, read N- to C-terminus: Hemolysin H3C (43 aa).

Residue methionine 1 is modified to N-formylmethionine.

It belongs to the staphylococcal hemolytic protein family.

It is found in the secreted. Virulence factor. Causes hemolysis of erythrocytes from sheep (HD(50)=2.63 mM), rabbit (HD(50)=2.37 mM), guinea pig (HD(50)=1.98 mM), dog (HD(50)=1.02 mM) and human (HD(50)=2.07 mM). Acts synergistically with beta-hemolysins from S.aureus ATCC 25923. Cytotoxic towards human dermal fibroblasts. In Staphylococcus cohnii subsp. cohnii, this protein is Hemolysin H3C.